The sequence spans 101 residues: UPF0235 protein MMP1055 (101 aa).

Belongs to the UPF0235 family.

This is UPF0235 protein MMP1055 from Methanococcus maripaludis (strain DSM 14266 / JCM 13030 / NBRC 101832 / S2 / LL).